Consider the following 253-residue polypeptide: FAS1 domain-containing protein CAGL0M08734g (253 aa).

A signal peptide spans 1-16 (MVALKYVLVPVALVAA). The FAS1 domain maps to 84–248 (DIYLDSQISV…GVILVIDATL (165 aa)).

Its subcellular location is the vacuole. This chain is FAS1 domain-containing protein CAGL0M08734g, found in Candida glabrata (strain ATCC 2001 / BCRC 20586 / JCM 3761 / NBRC 0622 / NRRL Y-65 / CBS 138) (Yeast).